Reading from the N-terminus, the 254-residue chain is Phosphoribosylaminoimidazole-succinocarboxamide synthase (254 aa).

It belongs to the SAICAR synthetase family.

The enzyme catalyses 5-amino-1-(5-phospho-D-ribosyl)imidazole-4-carboxylate + L-aspartate + ATP = (2S)-2-[5-amino-1-(5-phospho-beta-D-ribosyl)imidazole-4-carboxamido]succinate + ADP + phosphate + 2 H(+). It participates in purine metabolism; IMP biosynthesis via de novo pathway; 5-amino-1-(5-phospho-D-ribosyl)imidazole-4-carboxamide from 5-amino-1-(5-phospho-D-ribosyl)imidazole-4-carboxylate: step 1/2. The sequence is that of Phosphoribosylaminoimidazole-succinocarboxamide synthase from Rhodospirillum centenum (strain ATCC 51521 / SW).